A 579-amino-acid polypeptide reads, in one-letter code: CTP synthase 1 (579 aa).

The 255-residue stretch at 305–559 (KIALVGKYTN…LGLVAASAGI (255 aa)) folds into the Glutamine amidotransferase type-1 domain. Residue cysteine 404 is the For GATase activity of the active site. Lysine 422 is covalently cross-linked (Glycyl lysine isopeptide (Lys-Gly) (interchain with G-Cter in ubiquitin)). Active-site for GATase activity residues include histidine 535 and glutamate 537.

Belongs to the CTP synthase family. In terms of assembly, homodimer. Oligomerizes to a tetramer in the presence of its substrates UTP and ATP.

The catalysed reaction is UTP + L-glutamine + ATP + H2O = CTP + L-glutamate + ADP + phosphate + 2 H(+). It functions in the pathway pyrimidine metabolism; CTP biosynthesis via de novo pathway; CTP from UDP: step 2/2. Its activity is regulated as follows. Activated by GTP and inhibited by CTP. In terms of biological role, catalyzes the ATP-dependent amination of UTP to CTP with either L-glutamine or ammonia as the source of nitrogen. The sequence is that of CTP synthase 1 (URA7) from Saccharomyces cerevisiae (strain ATCC 204508 / S288c) (Baker's yeast).